The primary structure comprises 326 residues: tRNA U34 carboxymethyltransferase (326 aa).

Carboxy-S-adenosyl-L-methionine contacts are provided by residues K95, W109, K114, G134, 184 to 185, Y204, and R319; that span reads VE.

This sequence belongs to the class I-like SAM-binding methyltransferase superfamily. CmoB family.

It catalyses the reaction carboxy-S-adenosyl-L-methionine + 5-hydroxyuridine(34) in tRNA = 5-carboxymethoxyuridine(34) in tRNA + S-adenosyl-L-homocysteine + H(+). Functionally, catalyzes carboxymethyl transfer from carboxy-S-adenosyl-L-methionine (Cx-SAM) to 5-hydroxyuridine (ho5U) to form 5-carboxymethoxyuridine (cmo5U) at position 34 in tRNAs. In Trichodesmium erythraeum (strain IMS101), this protein is tRNA U34 carboxymethyltransferase.